We begin with the raw amino-acid sequence, 508 residues long: UTP--glucose-1-phosphate uridylyltransferase (508 aa).

At serine 13 the chain carries Phosphoserine. UTP-binding positions include 113–116, lysine 127, glutamine 190, and glycine 222; that span reads LNGG. 115–116 serves as a coordination point for substrate; the sequence is GG. Lysine 127 contacts Mg(2+). Residues histidine 223 and 251-253 each bind substrate; that span reads NID. Aspartate 253 and lysine 396 together coordinate UTP. Aspartate 253 contributes to the Mg(2+) binding site. Lysine 396 is a catalytic residue. Threonine 426 carries the post-translational modification Phosphothreonine. The residue at position 434 (serine 434) is a Phosphoserine. The residue at position 438 (lysine 438) is an N6-acetyllysine. Serine 448 and serine 461 each carry phosphoserine. The oligomerization stretch occupies residues 457-508; sequence HLTVSGDVTFGKNVSLKGTVIIIANHGDRIDIPPGAVLENKIVSGNLRILDH. Residues 502–503 are critical for end-to-end subunit interaction; that stretch reads NL.

Belongs to the UDPGP type 1 family. Homooctamer.

It localises to the cytoplasm. The enzyme catalyses alpha-D-glucose 1-phosphate + UTP + H(+) = UDP-alpha-D-glucose + diphosphate. Its pathway is glycan biosynthesis; glycogen biosynthesis. Its function is as follows. UTP--glucose-1-phosphate uridylyltransferase catalyzing the conversion of glucose-1-phosphate into UDP-glucose, a crucial precursor for the production of glycogen. This Cricetulus griseus (Chinese hamster) protein is UTP--glucose-1-phosphate uridylyltransferase (UGP2).